Here is a 732-residue protein sequence, read N- to C-terminus: Polyribonucleotide nucleotidyltransferase (732 aa).

The Mg(2+) site is built by D489 and D495. The region spanning 556-615 (PKIDTIQIDVDKIKIVIGKGGETIDKIIAETGVKIDIDEEGLVQIFSSDQAAIDRTKEII) is the KH domain. One can recognise an S1 motif domain in the interval 625–693 (GEVYHAKVVR…DKGRVDASMK (69 aa)). The disordered stretch occupies residues 691 to 732 (SMKALIPRPPKPEKKEEKASEAKEASNDQASKSQSETASEEK). Residues 700–716 (PKPEKKEEKASEAKEAS) are compositionally biased toward basic and acidic residues. The segment covering 717–732 (NDQASKSQSETASEEK) has biased composition (polar residues).

It belongs to the polyribonucleotide nucleotidyltransferase family. Requires Mg(2+) as cofactor.

Its subcellular location is the cytoplasm. It carries out the reaction RNA(n+1) + phosphate = RNA(n) + a ribonucleoside 5'-diphosphate. Its function is as follows. Involved in mRNA degradation. Catalyzes the phosphorolysis of single-stranded polyribonucleotides processively in the 3'- to 5'-direction. This chain is Polyribonucleotide nucleotidyltransferase, found in Streptococcus uberis (strain ATCC BAA-854 / 0140J).